Here is a 113-residue protein sequence, read N- to C-terminus: UPF0102 protein Shal_4069 (113 aa).

It belongs to the UPF0102 family.

This is UPF0102 protein Shal_4069 from Shewanella halifaxensis (strain HAW-EB4).